We begin with the raw amino-acid sequence, 336 residues long: Holliday junction branch migration complex subunit RuvB (336 aa).

Positions Ala-4–Tyr-184 are large ATPase domain (RuvB-L). Residues Ile-23, Arg-24, Gly-65, Lys-68, Thr-69, Thr-70, Glu-131–Tyr-133, Arg-174, Tyr-184, and Arg-221 contribute to the ATP site. Thr-69 lines the Mg(2+) pocket. Residues Gln-185–Asn-255 are small ATPAse domain (RuvB-S). Residues Ala-258 to Pro-336 form a head domain (RuvB-H) region. Positions 294, 313, and 318 each coordinate DNA.

The protein belongs to the RuvB family. Homohexamer. Forms an RuvA(8)-RuvB(12)-Holliday junction (HJ) complex. HJ DNA is sandwiched between 2 RuvA tetramers; dsDNA enters through RuvA and exits via RuvB. An RuvB hexamer assembles on each DNA strand where it exits the tetramer. Each RuvB hexamer is contacted by two RuvA subunits (via domain III) on 2 adjacent RuvB subunits; this complex drives branch migration. In the full resolvosome a probable DNA-RuvA(4)-RuvB(12)-RuvC(2) complex forms which resolves the HJ.

It localises to the cytoplasm. The catalysed reaction is ATP + H2O = ADP + phosphate + H(+). The RuvA-RuvB-RuvC complex processes Holliday junction (HJ) DNA during genetic recombination and DNA repair, while the RuvA-RuvB complex plays an important role in the rescue of blocked DNA replication forks via replication fork reversal (RFR). RuvA specifically binds to HJ cruciform DNA, conferring on it an open structure. The RuvB hexamer acts as an ATP-dependent pump, pulling dsDNA into and through the RuvAB complex. RuvB forms 2 homohexamers on either side of HJ DNA bound by 1 or 2 RuvA tetramers; 4 subunits per hexamer contact DNA at a time. Coordinated motions by a converter formed by DNA-disengaged RuvB subunits stimulates ATP hydrolysis and nucleotide exchange. Immobilization of the converter enables RuvB to convert the ATP-contained energy into a lever motion, pulling 2 nucleotides of DNA out of the RuvA tetramer per ATP hydrolyzed, thus driving DNA branch migration. The RuvB motors rotate together with the DNA substrate, which together with the progressing nucleotide cycle form the mechanistic basis for DNA recombination by continuous HJ branch migration. Branch migration allows RuvC to scan DNA until it finds its consensus sequence, where it cleaves and resolves cruciform DNA. This chain is Holliday junction branch migration complex subunit RuvB, found in Shigella flexneri serotype 5b (strain 8401).